A 1171-amino-acid chain; its full sequence is ATP-dependent helicase/deoxyribonuclease subunit B (1171 aa).

Residues 1-343 (MSLRFVIGRA…LVAEENYRYR (343 aa)) form the UvrD-like helicase ATP-binding domain. ATP is bound at residue 8-15 (GRAGSGKS). The UvrD-like helicase C-terminal domain occupies 281-587 (MEQPRFHSPA…QFANIPPSLD (307 aa)). Residues C805, C1129, C1132, and C1138 each contribute to the [4Fe-4S] cluster site.

The protein belongs to the helicase family. AddB/RexB type 1 subfamily. As to quaternary structure, heterodimer of AddA and AddB. It depends on Mg(2+) as a cofactor. [4Fe-4S] cluster serves as cofactor.

The heterodimer acts as both an ATP-dependent DNA helicase and an ATP-dependent, dual-direction single-stranded exonuclease. Recognizes the chi site generating a DNA molecule suitable for the initiation of homologous recombination. The AddB subunit has 5' -&gt; 3' nuclease activity but not helicase activity. The chain is ATP-dependent helicase/deoxyribonuclease subunit B from Bacillus anthracis.